The primary structure comprises 92 residues: Cell division topological specificity factor (92 aa).

It belongs to the MinE family.

Functionally, prevents the cell division inhibition by proteins MinC and MinD at internal division sites while permitting inhibition at polar sites. This ensures cell division at the proper site by restricting the formation of a division septum at the midpoint of the long axis of the cell. The sequence is that of Cell division topological specificity factor from Colwellia psychrerythraea (strain 34H / ATCC BAA-681) (Vibrio psychroerythus).